We begin with the raw amino-acid sequence, 484 residues long: Glutamate--tRNA ligase (484 aa).

Residues 11–21 (PSPTGYLHIGN) carry the 'HIGH' region motif. The 'KMSKS' region signature appears at 252–256 (KLSKR). Residue Lys255 participates in ATP binding.

Belongs to the class-I aminoacyl-tRNA synthetase family. Glutamate--tRNA ligase type 1 subfamily. Monomer.

The protein localises to the cytoplasm. It carries out the reaction tRNA(Glu) + L-glutamate + ATP = L-glutamyl-tRNA(Glu) + AMP + diphosphate. Its function is as follows. Catalyzes the attachment of glutamate to tRNA(Glu) in a two-step reaction: glutamate is first activated by ATP to form Glu-AMP and then transferred to the acceptor end of tRNA(Glu). This Staphylococcus aureus (strain Mu3 / ATCC 700698) protein is Glutamate--tRNA ligase.